Here is a 214-residue protein sequence, read N- to C-terminus: MLELSKIHNLRREYISKQFRRSNLTKNPMHLFSKWLYEAYCQIPDPNAMCLSTVDHTGQPFQRLVLLKYFNDKTIVFFTHLNSRKAIHINNNPKISLCFPWNIINRQIIITGSVYKISKKEAQKYFYTRPKNNQISTWASKQSTIISSKKVLKNKFLKLKKKYFQKSVPFPHFWVGYKININSMEFWQGGIYRLHDRFLYKKNKKKWYINRLSP.

Substrate is bound by residues 11–14 (RREY) and lysine 68. FMN-binding positions include 63 to 68 (RLVLLK), 78 to 79 (FT), arginine 84, lysine 85, and glutamine 107. 2 residues coordinate substrate: tyrosine 125 and arginine 129. Residues 142–143 (QS) and tryptophan 187 contribute to the FMN site. 193–195 (RLH) contacts substrate. Arginine 197 is a binding site for FMN.

Belongs to the pyridoxamine 5'-phosphate oxidase family. In terms of assembly, homodimer. Requires FMN as cofactor.

It carries out the reaction pyridoxamine 5'-phosphate + O2 + H2O = pyridoxal 5'-phosphate + H2O2 + NH4(+). The enzyme catalyses pyridoxine 5'-phosphate + O2 = pyridoxal 5'-phosphate + H2O2. It functions in the pathway cofactor metabolism; pyridoxal 5'-phosphate salvage; pyridoxal 5'-phosphate from pyridoxamine 5'-phosphate: step 1/1. It participates in cofactor metabolism; pyridoxal 5'-phosphate salvage; pyridoxal 5'-phosphate from pyridoxine 5'-phosphate: step 1/1. Its function is as follows. Catalyzes the oxidation of either pyridoxine 5'-phosphate (PNP) or pyridoxamine 5'-phosphate (PMP) into pyridoxal 5'-phosphate (PLP). The chain is Pyridoxine/pyridoxamine 5'-phosphate oxidase from Blochmanniella floridana.